A 426-amino-acid chain; its full sequence is 3-phosphoshikimate 1-carboxyvinyltransferase (426 aa).

3 residues coordinate 3-phosphoshikimate: Lys-22, Ser-23, and Arg-27. Residue Lys-22 participates in phosphoenolpyruvate binding. Residues Gly-96 and Arg-124 each coordinate phosphoenolpyruvate. 3-phosphoshikimate is bound by residues Ser-170, Ser-171, Gln-172, Ser-198, Asp-314, Asn-337, and Lys-341. Residue Gln-172 participates in phosphoenolpyruvate binding. Asp-314 acts as the Proton acceptor in catalysis. Residues Arg-345, Arg-387, and Lys-412 each contribute to the phosphoenolpyruvate site.

This sequence belongs to the EPSP synthase family. Monomer.

It localises to the cytoplasm. It catalyses the reaction 3-phosphoshikimate + phosphoenolpyruvate = 5-O-(1-carboxyvinyl)-3-phosphoshikimate + phosphate. The protein operates within metabolic intermediate biosynthesis; chorismate biosynthesis; chorismate from D-erythrose 4-phosphate and phosphoenolpyruvate: step 6/7. In terms of biological role, catalyzes the transfer of the enolpyruvyl moiety of phosphoenolpyruvate (PEP) to the 5-hydroxyl of shikimate-3-phosphate (S3P) to produce enolpyruvyl shikimate-3-phosphate and inorganic phosphate. This is 3-phosphoshikimate 1-carboxyvinyltransferase from Aliivibrio fischeri (strain ATCC 700601 / ES114) (Vibrio fischeri).